The sequence spans 573 residues: (R)-mandelonitrile lyase 3 (573 aa).

Positions 1–27 are cleaved as a signal peptide; the sequence is MVKSTMSAVLLVLHIFVLHLQYSEVQS. N-linked (GlcNAc...) asparagine glycosylation is present at asparagine 30. 63-64 contributes to the FAD binding site; the sequence is TA. Asparagine 75 is a glycosylation site (N-linked (GlcNAc...) asparagine). FAD-binding positions include 82–83, valine 129, threonine 133, and 137–140; these read ER and NAGV. N-linked (GlcNAc...) asparagine glycosylation is found at asparagine 145, asparagine 150, asparagine 162, and asparagine 218. Valine 244 lines the FAD pocket. Residues asparagine 252, asparagine 267, and asparagine 309 are each glycosylated (N-linked (GlcNAc...) asparagine). Cysteine 356 lines the substrate pocket. Residues asparagine 380, asparagine 402, asparagine 420, and asparagine 467 are each glycosylated (N-linked (GlcNAc...) asparagine). A disulfide bridge connects residues cysteine 427 and cysteine 478. Tyrosine 485 lines the substrate pocket. FAD contacts are provided by residues 486–487 and glycine 515; that span reads WH. The Proton donor role is filled by histidine 487. The active-site Proton acceptor is histidine 525. Residue 526-527 coordinates FAD; the sequence is PQ.

It belongs to the GMC oxidoreductase family. Monomer. FAD serves as cofactor.

It localises to the vacuole. It is found in the aleurone grain. The catalysed reaction is (R)-mandelonitrile = benzaldehyde + hydrogen cyanide. Functionally, involved in cyanogenesis, the release of HCN from injured tissues. Catalyzes the stereospecific addition of HCN to a variety of aldehydes in vitro. It is a major seed constituent, and could have the additional role of a storage form for reduced nitrogen. This chain is (R)-mandelonitrile lyase 3 (MDL3), found in Prunus serotina (Black cherry).